The following is a 338-amino-acid chain: MSRFASLAAFEAALERLPVADADAITAARARQASLTKPAGSLGRLEDIAVFMAGWQGTAQPVIEQGRAAIFAGNHGFVVHGVSAFPASVTAAMVGNFAAGGAAINALAGAAGLDLRVIALDLDRPTADFTIAAAMDETECLAALAAGAAVVEPGLHLLVVGEMGIGNSTAAAALCARSYGGSPAQWAGPGTGVDAGGIARKVAVVERALAFHADAPDTPFEILRRLGGREIAGVAGAVLEARRLRIPVVLDGFISCAALAPLAAAVPAITDHCLAGHCSAEPGHIRLLEHLGLDPLLSLGMRLGEGSGAALAVSVIRAALATHNGMATFAQAGVADGL.

Residue E305 is the Proton acceptor of the active site.

This sequence belongs to the CobT family.

It catalyses the reaction 5,6-dimethylbenzimidazole + nicotinate beta-D-ribonucleotide = alpha-ribazole 5'-phosphate + nicotinate + H(+). It participates in nucleoside biosynthesis; alpha-ribazole biosynthesis; alpha-ribazole from 5,6-dimethylbenzimidazole: step 1/2. Functionally, catalyzes the synthesis of alpha-ribazole-5'-phosphate from nicotinate mononucleotide (NAMN) and 5,6-dimethylbenzimidazole (DMB). This chain is Nicotinate-nucleotide--dimethylbenzimidazole phosphoribosyltransferase, found in Novosphingobium aromaticivorans (strain ATCC 700278 / DSM 12444 / CCUG 56034 / CIP 105152 / NBRC 16084 / F199).